A 480-amino-acid chain; its full sequence is Acetylxylan esterase (480 aa).

An N-terminal signal peptide occupies residues 1–19; the sequence is MNRKLFMTGLLMLAMTMQA.

The protein belongs to the AB hydrolase superfamily.

It catalyses the reaction Deacetylation of xylans and xylo-oligosaccharides.. Its pathway is glycan degradation; xylan degradation. Its function is as follows. Involved in degradation of plant cell wall polysaccharides. Is an acetyl esterase with broad substrate specificity, releasing acetic acid from acetylated xylo-oligosaccharides and acetylated xylan as well as xylose-tetraacetate, 4-O-methylumbelliferyl acetate, glucose-pentaacetate, and cephalosporin C. Appears to have greater activity on oligosaccharides than on polymeric substrates. Is also able to release acetic acid from xylo-oligosaccharides with 4-O-methylglucuronic acid side groups proximally located to O-acetyl esters. Preferentially targets xylo-oligosaccharides possessing three or more O-acetyl groups, but following their depletion it is active on the less acetylated portion of the substrate. This chain is Acetylxylan esterase, found in Xylanibacter ruminicola (strain ATCC 19189 / DSM 19721 / CIP 105475 / JCM 8958 / 23) (Prevotella ruminicola).